We begin with the raw amino-acid sequence, 173 residues long: MNALQWSFRAQCLTGFLFCTGLLAYAIFLQLHQGLEPCPLCIFQRIAFAVLGILFLIAGLYNSSNVYTRKAYGLLIFLTAIIGTGIAGRHVWVQLMPHNTISSCGSPLSFLSETMGPFEVFRTVLTGTSNCGNIDWRFLGLSMPMWSMFWFVALALLGLLVGFKAERRKPLFS.

Topologically, residues 1–11 (MNALQWSFRAQ) are cytoplasmic. A helical transmembrane segment spans residues 12–28 (CLTGFLFCTGLLAYAIF). The Periplasmic portion of the chain corresponds to 29–46 (LQLHQGLEPCPLCIFQRI). Cysteines 38 and 41 form a disulfide. Residues 47–63 (AFAVLGILFLIAGLYNS) form a helical membrane-spanning segment. At 64–70 (SNVYTRK) the chain is on the cytoplasmic side. A helical transmembrane segment spans residues 71–88 (AYGLLIFLTAIIGTGIAG). At 89–145 (RHVWVQLMPHNTISSCGSPLSFLSETMGPFEVFRTVLTGTSNCGNIDWRFLGLSMPM) the chain is on the periplasmic side. Cys-104 and Cys-131 form a disulfide bridge. A helical transmembrane segment spans residues 146–164 (WSMFWFVALALLGLLVGFK). Topologically, residues 165 to 173 (AERRKPLFS) are cytoplasmic.

The protein belongs to the DsbB family.

Its subcellular location is the cell inner membrane. Required for disulfide bond formation in some periplasmic proteins. Acts by oxidizing the DsbA protein. In Xylella fastidiosa (strain Temecula1 / ATCC 700964), this protein is Disulfide bond formation protein B.